The following is a 185-amino-acid chain: TATA-box-binding protein (185 aa).

Tandem repeats lie at residues 3 to 78 and 94 to 176.

The protein belongs to the TBP family.

In terms of biological role, general factor that plays a role in the activation of archaeal genes transcribed by RNA polymerase. Binds specifically to the TATA box promoter element which lies close to the position of transcription initiation. The sequence is that of TATA-box-binding protein from Methanopyrus kandleri (strain AV19 / DSM 6324 / JCM 9639 / NBRC 100938).